The sequence spans 275 residues: Lycopene elongase/hydratase (275 aa).

A run of 9 helical transmembrane segments spans residues 13–33 (FWLY…TTVG), 38–58 (APAV…LYGI), 84–104 (AAVA…AAPL), 107–127 (EAWP…APPL), 134–154 (VLDS…YAGV), 160–180 (PLLA…FSAI), 203–223 (ALAY…LVDV), 225–245 (FGLL…LQVA), and 253–273 (YPAV…WGVV).

This sequence belongs to the UbiA prenyltransferase family.

The protein localises to the cell membrane. The enzyme catalyses all-trans-lycopene + dimethylallyl diphosphate + H2O = dihydroisopentenyldehydrorhodopin + diphosphate. It catalyses the reaction isopentenyldehydrorhodopin + dimethylallyl diphosphate + H2O = dihydrobisanhydrobacterioruberin + diphosphate. Its pathway is carotenoid biosynthesis. With respect to regulation, inhibited by bacterioopsin. In terms of biological role, involved in the biosynthesis of the acyclic C50 carotenoid bacterioruberin (BR). Acts as a bifunctional elongase/hydratase that catalyzes the elongation of lycopene by attaching a C(5) isoprene unit at C-2, as well as the hydroxylation of the previous end of the molecule. The enzyme acts at both ends of the substrate, and catalyzes the conversion of lycopene to the C(45) intermediate dihydroisopentenyldehydrorhodopin (DH-IDR) and the conversion of isopentenyldehydrorhodopin (IDR) to the C(50) carotenoid dihydrobisanhydrobacterioruberin (DH-BABR). Can also catalyze the conversion of lycopene to tetrahydrobisanhydrobacterioruberin (TH-BABR). The protein is Lycopene elongase/hydratase of Halobacterium salinarum (strain ATCC 700922 / JCM 11081 / NRC-1) (Halobacterium halobium).